Consider the following 346-residue polypeptide: Tetraacyldisaccharide 4'-kinase (346 aa).

An ATP-binding site is contributed by 53-60 (TCGGTGKT).

The protein belongs to the LpxK family.

It carries out the reaction a lipid A disaccharide + ATP = a lipid IVA + ADP + H(+). It participates in glycolipid biosynthesis; lipid IV(A) biosynthesis; lipid IV(A) from (3R)-3-hydroxytetradecanoyl-[acyl-carrier-protein] and UDP-N-acetyl-alpha-D-glucosamine: step 6/6. Functionally, transfers the gamma-phosphate of ATP to the 4'-position of a tetraacyldisaccharide 1-phosphate intermediate (termed DS-1-P) to form tetraacyldisaccharide 1,4'-bis-phosphate (lipid IVA). This chain is Tetraacyldisaccharide 4'-kinase, found in Bartonella tribocorum (strain CIP 105476 / IBS 506).